Here is a 421-residue protein sequence, read N- to C-terminus: MSRQMWLDTSALLEAISEYVVRCNGDTFSGLTTGDFNALSNMFTQLSVSSAGYVSDPRVPLQTMSNMFVSFITSTDRCGYMLRKTWFNSDTKPTVSDDFITTYIRPRLQVPMSDTVRQLNNLSLQPSAKPKLYERQNAIMKGLDIPYSEPIEPCKLFRSVAGQTGNIPMMGILATPPAAQQQPFFVAERRRILFGIRSNAAIPAGAYQFVVPAWASVLSVTGAYVYFTNSFFGTTIAGVTATATAADAATTFTVPTDANNLPVQTDSRLSFSLGGGNINLELGVAKTGFCVAIEGEFTILANRSQAYYTLNSITQTPTSIDDFDVSDFLTTFLSQLRACGQYEIFSDAMDQLTNSLITNYMDPPAIPAGLAFTSPWFRFSERARTILALQNVDLNIRKLIVRHLWVITSLIAVFGRYYRPN.

This sequence belongs to the phytoreovirus outer capsid protein P8 family. Homotrimer. Homomultimer. Interacts with host peroxisomal glycolate oxidase (GOX). This interaction mediates its relocation to virus factories peripheral to host peroxisomes.

The protein resides in the virion. The protein localises to the host cytoplasm. Capsid protein which self-assembles to form the outer icosahedral capsid with a T=13 symmetry, about 70 nm in diameter and consisting of 780 molecules capsid proteins. The polypeptide is Outer capsid protein P8 (S8) (Rice dwarf virus (isolate S) (RDV)).